Here is a 257-residue protein sequence, read N- to C-terminus: 5'-nucleotidase SurE (257 aa).

Residues Asp13, Asp14, Ser44, and Asn100 each coordinate a divalent metal cation.

Belongs to the SurE nucleotidase family. A divalent metal cation serves as cofactor.

It is found in the cytoplasm. It carries out the reaction a ribonucleoside 5'-phosphate + H2O = a ribonucleoside + phosphate. Its function is as follows. Nucleotidase that shows phosphatase activity on nucleoside 5'-monophosphates. The polypeptide is 5'-nucleotidase SurE (Phocaeicola vulgatus (strain ATCC 8482 / DSM 1447 / JCM 5826 / CCUG 4940 / NBRC 14291 / NCTC 11154) (Bacteroides vulgatus)).